Consider the following 257-residue polypeptide: Thiazole synthase (257 aa).

The Schiff-base intermediate with DXP role is filled by K98. 1-deoxy-D-xylulose 5-phosphate contacts are provided by residues G159, 185 to 186, and 207 to 208; these read AG and NT.

The protein belongs to the ThiG family. As to quaternary structure, homotetramer. Forms heterodimers with either ThiH or ThiS.

The protein resides in the cytoplasm. It carries out the reaction [ThiS sulfur-carrier protein]-C-terminal-Gly-aminoethanethioate + 2-iminoacetate + 1-deoxy-D-xylulose 5-phosphate = [ThiS sulfur-carrier protein]-C-terminal Gly-Gly + 2-[(2R,5Z)-2-carboxy-4-methylthiazol-5(2H)-ylidene]ethyl phosphate + 2 H2O + H(+). It participates in cofactor biosynthesis; thiamine diphosphate biosynthesis. Catalyzes the rearrangement of 1-deoxy-D-xylulose 5-phosphate (DXP) to produce the thiazole phosphate moiety of thiamine. Sulfur is provided by the thiocarboxylate moiety of the carrier protein ThiS. In vitro, sulfur can be provided by H(2)S. The polypeptide is Thiazole synthase (Anaeromyxobacter dehalogenans (strain 2CP-C)).